Consider the following 631-residue polypeptide: 1-deoxy-D-xylulose-5-phosphate synthase (631 aa).

Thiamine diphosphate-binding positions include histidine 87 and 128–130 (GHS). Aspartate 159 contacts Mg(2+). Thiamine diphosphate is bound by residues 160 to 161 (GA), asparagine 188, phenylalanine 295, and glutamate 377. Mg(2+) is bound at residue asparagine 188.

Belongs to the transketolase family. DXPS subfamily. As to quaternary structure, homodimer. Mg(2+) is required as a cofactor. Thiamine diphosphate serves as cofactor.

The enzyme catalyses D-glyceraldehyde 3-phosphate + pyruvate + H(+) = 1-deoxy-D-xylulose 5-phosphate + CO2. It participates in metabolic intermediate biosynthesis; 1-deoxy-D-xylulose 5-phosphate biosynthesis; 1-deoxy-D-xylulose 5-phosphate from D-glyceraldehyde 3-phosphate and pyruvate: step 1/1. In terms of biological role, catalyzes the acyloin condensation reaction between C atoms 2 and 3 of pyruvate and glyceraldehyde 3-phosphate to yield 1-deoxy-D-xylulose-5-phosphate (DXP). The sequence is that of 1-deoxy-D-xylulose-5-phosphate synthase from Pseudomonas entomophila (strain L48).